We begin with the raw amino-acid sequence, 369 residues long: Peptide chain release factor 2 (369 aa).

Position 251 is an N5-methylglutamine (Gln251).

The protein belongs to the prokaryotic/mitochondrial release factor family. Post-translationally, methylated by PrmC. Methylation increases the termination efficiency of RF2.

It localises to the cytoplasm. Functionally, peptide chain release factor 2 directs the termination of translation in response to the peptide chain termination codons UGA and UAA. In Acidothermus cellulolyticus (strain ATCC 43068 / DSM 8971 / 11B), this protein is Peptide chain release factor 2.